Reading from the N-terminus, the 74-residue chain is Translational regulator CsrA (74 aa).

This sequence belongs to the CsrA/RsmA family. In terms of assembly, homodimer; the beta-strands of each monomer intercalate to form a hydrophobic core, while the alpha-helices form wings that extend away from the core.

The protein resides in the cytoplasm. Its function is as follows. A translational regulator that binds mRNA to regulate translation initiation and/or mRNA stability. Usually binds in the 5'-UTR at or near the Shine-Dalgarno sequence preventing ribosome-binding, thus repressing translation. Its main target seems to be the major flagellin gene, while its function is anatagonized by FliW. The protein is Translational regulator CsrA of Bacillus velezensis (strain DSM 23117 / BGSC 10A6 / LMG 26770 / FZB42) (Bacillus amyloliquefaciens subsp. plantarum).